Reading from the N-terminus, the 302-residue chain is Aspartate carbamoyltransferase catalytic subunit (302 aa).

Carbamoyl phosphate is bound by residues Arg-53 and Thr-54. Lys-82 lines the L-aspartate pocket. 3 residues coordinate carbamoyl phosphate: Arg-103, His-131, and Gln-134. L-aspartate is bound by residues Arg-164 and Arg-223. Carbamoyl phosphate is bound by residues Leu-260 and Pro-261.

Belongs to the aspartate/ornithine carbamoyltransferase superfamily. ATCase family. As to quaternary structure, heterooligomer of catalytic and regulatory chains.

It carries out the reaction carbamoyl phosphate + L-aspartate = N-carbamoyl-L-aspartate + phosphate + H(+). It functions in the pathway pyrimidine metabolism; UMP biosynthesis via de novo pathway; (S)-dihydroorotate from bicarbonate: step 2/3. Functionally, catalyzes the condensation of carbamoyl phosphate and aspartate to form carbamoyl aspartate and inorganic phosphate, the committed step in the de novo pyrimidine nucleotide biosynthesis pathway. This Methanococcus maripaludis (strain C5 / ATCC BAA-1333) protein is Aspartate carbamoyltransferase catalytic subunit.